The chain runs to 125 residues: Ribosome-binding factor A (125 aa).

The protein belongs to the RbfA family. Monomer. Binds 30S ribosomal subunits, but not 50S ribosomal subunits or 70S ribosomes.

Its subcellular location is the cytoplasm. Its function is as follows. One of several proteins that assist in the late maturation steps of the functional core of the 30S ribosomal subunit. Associates with free 30S ribosomal subunits (but not with 30S subunits that are part of 70S ribosomes or polysomes). Required for efficient processing of 16S rRNA. May interact with the 5'-terminal helix region of 16S rRNA. In Chloroherpeton thalassium (strain ATCC 35110 / GB-78), this protein is Ribosome-binding factor A.